Here is an 840-residue protein sequence, read N- to C-terminus: Homeobox-leucine zipper protein HOX9 (840 aa).

Disordered regions lie at residues 1 to 26 (MAAA…AGMD) and 135 to 160 (NPSL…DASN). Residues 12–21 (GSDGGGGGYD) show a composition bias toward gly residues. The segment at residues 26-89 (DSGKYVRYTP…NRRCRDKQRK (64 aa)) is a DNA-binding region (homeobox). Residues 86-135 (KQRKEASRLQAVNRKLTAMNKLLMEENERLQKQVSQLVHENAYMKQQLQN) adopt a coiled-coil conformation. An START domain is found at 157–385 (DASNPSGLLT…IAQETSGEVV (229 aa)).

This sequence belongs to the HD-ZIP homeobox family. Class III subfamily. In terms of tissue distribution, expressed in seedlings, roots, stems, leaf sheaths and blades and panicles.

The protein resides in the nucleus. In terms of biological role, probable transcription factor. This is Homeobox-leucine zipper protein HOX9 (HOX9) from Oryza sativa subsp. indica (Rice).